Here is a 614-residue protein sequence, read N- to C-terminus: V-type proton ATPase catalytic subunit A isoform 2 (614 aa).

Ser-142 is modified (phosphoserine). 247 to 254 lines the ATP pocket; sequence GAFGCGKT.

It belongs to the ATPase alpha/beta chains family. V-ATPase is a heteromultimeric enzyme made up of two complexes: the ATP-hydrolytic V1 complex and the proton translocation V0 complex. The V1 complex consists of three catalytic AB heterodimers that form a heterohexamer, three peripheral stalks each consisting of EG heterodimers, one central rotor including subunits D and F, and the regulatory subunits C and H. The proton translocation complex V0 consists of the proton transport subunit a, a ring of proteolipid subunits c9c'', rotary subunit d, subunits e and f, and the accessory subunits VhaAC45 and ATP6AP2.

It carries out the reaction ATP + H2O + 4 H(+)(in) = ADP + phosphate + 5 H(+)(out). With respect to regulation, ATP hydrolysis occurs at the interface between the nucleotide-binding domains of subunits A and B. ATP hydrolysis triggers a conformational change in the subunits D and F, which induces a shift of subunit d. The c-ring is subsequently rotated and results in a continuous proton translocation across the membrane. Functionally, catalytic subunit of the V1 complex of vacuolar(H+)-ATPase (V-ATPase), a multisubunit enzyme composed of a peripheral complex (V1) that hydrolyzes ATP and a membrane integral complex (V0) that translocates protons. V-ATPase is responsible for acidifying and maintaining the pH of intracellular compartments and in some cell types, is targeted to the plasma membrane, where it is responsible for acidifying the extracellular environment. The chain is V-type proton ATPase catalytic subunit A isoform 2 (Vha68-2) from Drosophila melanogaster (Fruit fly).